The following is a 537-amino-acid chain: Probable E3 ubiquitin-protein ligase ARI3 (537 aa).

A disordered region spans residues 1–30; sequence MDDDYMMLDDDYGEEEDENYSEDDNYSEAE. A TRIAD supradomain region spans residues 117–331; that stretch reads KTMKCDVCME…IAGHSCGRYK (215 aa). Zn(2+) is bound by residues cysteine 121, cysteine 124, cysteine 139, histidine 141, cysteine 144, cysteine 147, cysteine 166, cysteine 171, cysteine 210, cysteine 216, cysteine 234, cysteine 236, cysteine 241, cysteine 244, histidine 249, cysteine 254, cysteine 281, and cysteine 284. The RING-type 1 zinc-finger motif lies at 121 to 171; that stretch reads CDVCMEDDLPSNVMTRMECGHRFCNDCWIGHFTVKINEGESKRILCMAHEC. An IBR-type zinc finger spans residues 190-254; the sequence is DRYDRFLIES…LSESHSPCSC (65 aa). The segment at 281-309 adopts an RING-type 2; atypical zinc-finger fold; sequence CPKCSKPIQKRDGCNLMTCKCGQHFCWLC. Cysteine 294 is a catalytic residue. Zn(2+) contacts are provided by cysteine 299, cysteine 301, cysteine 306, cysteine 309, histidine 317, and cysteine 327.

Belongs to the RBR family. Ariadne subfamily. Zn(2+) is required as a cofactor. As to expression, ubiquitous.

It catalyses the reaction [E2 ubiquitin-conjugating enzyme]-S-ubiquitinyl-L-cysteine + [acceptor protein]-L-lysine = [E2 ubiquitin-conjugating enzyme]-L-cysteine + [acceptor protein]-N(6)-ubiquitinyl-L-lysine.. Its pathway is protein modification; protein ubiquitination. Its function is as follows. Might act as an E3 ubiquitin-protein ligase, or as part of E3 complex, which accepts ubiquitin from specific E2 ubiquitin-conjugating enzymes and then transfers it to substrates. This Arabidopsis thaliana (Mouse-ear cress) protein is Probable E3 ubiquitin-protein ligase ARI3 (ARI3).